The sequence spans 551 residues: Glutamate--tRNA ligase (551 aa).

Residues 100–110 (PNPNGPPTLGS) carry the 'HIGH' region motif.

Belongs to the class-I aminoacyl-tRNA synthetase family. Glutamate--tRNA ligase type 2 subfamily.

The protein localises to the cytoplasm. The catalysed reaction is tRNA(Glu) + L-glutamate + ATP = L-glutamyl-tRNA(Glu) + AMP + diphosphate. Functionally, catalyzes the attachment of glutamate to tRNA(Glu) in a two-step reaction: glutamate is first activated by ATP to form Glu-AMP and then transferred to the acceptor end of tRNA(Glu). The chain is Glutamate--tRNA ligase from Archaeoglobus fulgidus (strain ATCC 49558 / DSM 4304 / JCM 9628 / NBRC 100126 / VC-16).